The primary structure comprises 156 residues: Nucleoredoxin-like protein 2 (156 aa).

The 139-residue stretch at 9–147 (HLVTCKGATV…LACFQDWVEA (139 aa)) folds into the Thioredoxin domain.

This sequence belongs to the nucleoredoxin family.

Functionally, may be involved in the maintenance of both the function and the viability of sensory neurons, including photoreceptors and olfactory neurons. The chain is Nucleoredoxin-like protein 2 (NXNL2) from Homo sapiens (Human).